We begin with the raw amino-acid sequence, 63 residues long: uncharacterized protein (63 aa).

The chain crosses the membrane as a helical span at residues 20–40 (IVLLISFIFFFGRFIYSSVGA).

Its subcellular location is the membrane. This is an uncharacterized protein from Escherichia coli O157:H7.